Reading from the N-terminus, the 399-residue chain is Tyrosine--tRNA ligase (399 aa).

The short motif at 42 to 51 is the 'HIGH' region element; it reads PTAPDIHLGH. Residues 226–230 carry the 'KMSKS' region motif; it reads KMSKS. K229 is an ATP binding site. Residues 337-398 form the S4 RNA-binding domain; that stretch reads LTIGYILQRA…GKRRFAKVKV (62 aa).

It belongs to the class-I aminoacyl-tRNA synthetase family. TyrS type 2 subfamily. Homodimer.

It is found in the cytoplasm. The catalysed reaction is tRNA(Tyr) + L-tyrosine + ATP = L-tyrosyl-tRNA(Tyr) + AMP + diphosphate + H(+). Its function is as follows. Catalyzes the attachment of tyrosine to tRNA(Tyr) in a two-step reaction: tyrosine is first activated by ATP to form Tyr-AMP and then transferred to the acceptor end of tRNA(Tyr). The protein is Tyrosine--tRNA ligase of Coxiella burnetii (strain RSA 493 / Nine Mile phase I).